The sequence spans 3926 residues: Protein bassoon (3926 aa).

A disordered region spans residues 1–161 (MGNEVSLEGG…PTSPYSVPQI (161 aa)). The N-myristoyl glycine moiety is linked to residue glycine 2. Pro residues-rich tracts occupy residues 15 to 30 (PLPP…PGPG) and 58 to 72 (PPVP…PGPG). The interval 23-32 (PGPGPGPGPG) is 5 X 2 AA tandem repeats of P-G. The segment at 61 to 74 (PGPGPGPGPGPGPG) is 7 X 2 AA tandem repeats of P-G. 2 stretches are compositionally biased toward polar residues: residues 90–105 (RAAS…TTPG) and 130–157 (QVDS…SPYS). Serine 145 is subject to Phosphoserine. Omega-N-methylarginine is present on arginine 148. 2 consecutive C4-type zinc fingers follow at residues 170–193 (CPIC…CTQC) and 198–220 (CNQC…CLNC). Disordered stretches follow at residues 231–343 (TTAP…EQTQ) and 366–459 (SVQP…KTMP). Over residues 233–243 (APRSKSQQQLH) the composition is skewed to polar residues. Phosphoserine occurs at positions 244 and 248. The segment covering 366-377 (SVQPEADTQGQP) has biased composition (polar residues). 2 C4-type zinc fingers span residues 465-488 (CPLC…CTTC) and 493-515 (CNLC…CLNC). 2 disordered regions span residues 524–927 (SLGE…LQGG) and 940–1248 (GSYG…AEGT). The segment covering 552-569 (PLKQKGPQGLGQPSGPLP) has biased composition (low complexity). Repeat copies occupy residues 571–577 (KASPLST), 578–584 (KASPLPS), and 585–591 (KASPQAK). Residues 571–591 (KASPLSTKASPLPSKASPQAK) are 3 X 7 AA tandem repeats of K-A-S-P-[LQ]-[APS]-[KST]. The span at 619-631 (MPKPPPETTPTPA) shows a compositional bias: pro residues. Polar residues predominate over residues 671–680 (QDASRSPQSL). Residues 681 to 698 (SDTGYSSDGISSSQSEIT) are compositionally biased toward low complexity. Over residues 771–787 (FDSDEELEDILEEDEDS) the composition is skewed to acidic residues. Residues 788–797 (AEWRRRREQQ) show a composition bias toward basic and acidic residues. Over residues 851-862 (SAEEDNLEEDDT) the composition is skewed to acidic residues. Arginine 867 is modified (omega-N-methylarginine). Serine 970 bears the Phosphoserine mark. The span at 984–1001 (PASTPSYTSGTSPTSLSS) shows a compositional bias: low complexity. A coiled-coil region spans residues 1037–1092 (IEDSSEEEELREEEELLREQEKMREVEQQRIRSTARKTRRDKEELRAQRRRERSKT). Residues 1039 to 1052 (DSSEEEELREEEEL) show a composition bias toward acidic residues. Serine 1040 and serine 1041 each carry phosphoserine. Basic and acidic residues predominate over residues 1053–1066 (LREQEKMREVEQQR). At serine 1090 the chain carries Phosphoserine. Threonine 1092 carries the post-translational modification Phosphothreonine. A phosphoserine mark is found at serine 1098 and serine 1104. The span at 1107–1122 (EELRQAAEMEELHRSS) shows a compositional bias: basic and acidic residues. Low complexity-rich tracts occupy residues 1123-1133 (CSEYSPSPSLD) and 1163-1180 (SPTE…SGRP). Residues 1181-1208 (LKSAEEAYEEMMRKAELLQRQQGQAAGA) are a coiled coil. The segment covering 1182-1197 (KSAEEAYEEMMRKAEL) has biased composition (basic and acidic residues). A compositionally biased stretch (low complexity) spans 1199 to 1209 (QRQQGQAAGAR). Serine 1226 is modified (phosphoserine). A coiled-coil region spans residues 1276–1294 (RDLAFAEDKKKEKQFLNAE). 2 disordered regions span residues 1298–1547 (MDPM…RLVW) and 1570–1620 (RMVH…RVPS). Positions 1322-1332 (SFSTPTSSDSS) are enriched in low complexity. Threonine 1343 carries O-linked (GlcNAc) threonine glycosylation. A compositionally biased stretch (basic and acidic residues) spans 1346–1355 (FAKETQDPLK). Composition is skewed to low complexity over residues 1358-1367 (SSPASPSSAS) and 1377-1392 (GPGT…CPAG). Threonine 1384 carries O-linked (GlcNAc) threonine glycosylation. Positions 1408-1434 (RSPSPSSTAHSYGHSPTTANYGSQTED) are enriched in polar residues. Low complexity predominate over residues 1466-1493 (PSRAYSYFASSSPPLSPSSPSESPTFSP). Phosphoserine occurs at positions 1477, 1486, and 1488. The span at 1570–1598 (RMVHASASTSPLCSPTETQPTTHGYSQTT) shows a compositional bias: polar residues. Pro residues predominate over residues 1606–1616 (PPEPPGPPGFP). Residues arginine 1787 and arginine 1791 each carry the omega-N-methylarginine modification. Arginine 1801 is subject to Asymmetric dimethylarginine; alternate. Omega-N-methylarginine; alternate is present on arginine 1801. Position 1813 is an omega-N-methylarginine (arginine 1813). The disordered stretch occupies residues 1924 to 1978 (PEKSMADAAPPGQSSSPFYGPRDPEPPEPPTYRAQGVVGPGPHEEQRPYPQGLPG). 2 positions are modified to phosphoserine: serine 1985 and serine 2041. Residues arginine 2046 and arginine 2076 each carry the omega-N-methylarginine modification. An asymmetric dimethylarginine mark is found at arginine 2250, arginine 2260, and arginine 2266. The tract at residues 2287-2309 (AAKAPGAGGPSRPEMPVGAAREE) is disordered. Residue threonine 2314 is glycosylated (O-linked (GlcNAc) threonine). Residues 2324–2341 (GAPAPAPLAGQKPPADAA) show a composition bias toward low complexity. Disordered regions lie at residues 2324–2370 (GAPA…KQQE) and 2532–2568 (PSSA…ACEL). Positions 2351–2476 (RPGFEKEEAS…EEQKQRQKAP (126 aa)) form a coiled coil. Positions 2353-2370 (GFEKEEASQEERQRKQQE) are enriched in basic and acidic residues. A compositionally biased stretch (polar residues) spans 2533-2543 (SSASDMSLQTE). Serine 2570 bears the Phosphoserine mark. A phosphothreonine mark is found at threonine 2587 and threonine 2614. The interval 2601–2655 (RRRARRSADCSVQTDDEDSAEWEQPVRRRRSRLPRHSDSGSDSKHDATASSSSAA) is disordered. Residues 2635–2647 (RHSDSGSDSKHDA) show a composition bias toward basic and acidic residues. Threonine 2691 carries an O-linked (GlcNAc) threonine glycan. Residues 2721-3268 (EPDGQAQGVA…PGSSGRPGKE (548 aa)) are interaction with DAO. Residues serine 2802, serine 2851, and serine 2857 each carry the phosphoserine modification. Residues 2845–2865 (TLQRSLSDPKPLSPTAEESAK) form a disordered region. An O-linked (GlcNAc) threonine glycan is attached at threonine 2936. The stretch at 2939 to 2981 (SLLRELDRDLRLVEHESTKLRKKQAELDEEEKEIDAKLKYLEL) forms a coiled coil. Serine 3013 bears the Phosphoserine mark. Low complexity predominate over residues 3039–3055 (AAAPATPSGPTAFQQPR). Disordered regions lie at residues 3039–3375 (AAAP…FSPI), 3424–3551 (GMSS…PRAH), and 3572–3897 (EAYH…SVFS). Over residues 3083 to 3095 (YPGPSTYPAPAFP) the composition is skewed to pro residues. The segment covering 3165-3176 (ASPVVPMSSAPS) has biased composition (low complexity). Positions 3205 to 3228 (SVSQSPAPTYPSDSHYTSLEQNVP) are enriched in polar residues. Serine 3291 carries the phosphoserine modification. 3 stretches are compositionally biased toward basic and acidic residues: residues 3321 to 3333 (GDSD…RVEK), 3363 to 3375 (QGME…FSPI), and 3465 to 3477 (GYER…ERLQ). Serine 3373 carries the post-translational modification Phosphoserine. Arginine 3492 is modified (omega-N-methylarginine). Composition is skewed to basic and acidic residues over residues 3540–3551 (VQEHVKDGPRAH), 3583–3593 (WFDKPRDARSD), 3628–3647 (LWPH…EHRH), and 3657–3681 (HTGE…EARP). Positions 3703 to 3712 (AEYSQPSRAS) are enriched in polar residues. Residues 3741–3807 (PQAQPQLQGR…RLQQQSQPTT (67 aa)) show a composition bias toward low complexity. Arginine 3808 is modified (omega-N-methylarginine). Composition is skewed to low complexity over residues 3849-3860 (AKAPQQGRAPQA) and 3882-3892 (GAPAGQPGADG).

Interacts with PCLO, ERC2/CAST1, RIMS1 and UNC13A. Interacts with TPRG1L. Interacts with DYNLL1 and DYNLL2; these interactions potentially link PTVs to dynein and myosin V motor complexes. Interacts with ATG5; this interaction is important for the regulation of presynaptic autophagy. Interacts (via C-terminus) with TRIO (via N-terminus). Interacts with CTBP1. Interacts with SIAH1; this interaction negatively regulates SIAH1 E3 ligase activity. Interacts (via coiled region) with DAO; the interaction is direct. Post-translationally, myristoylated. The N-terminal myristoylation is not sufficient for presynaptic localization. In terms of tissue distribution, exclusively expressed in brain.

The protein localises to the cytoplasm. It is found in the presynaptic active zone. Its subcellular location is the cytoskeleton. The protein resides in the cytoplasmic vesicle. It localises to the secretory vesicle. The protein localises to the synaptic vesicle membrane. Scaffold protein of the presynaptic cytomatrix at the active zone (CAZ) which is the place in the synapse where neurotransmitter is released. After synthesis, participates in the formation of Golgi-derived membranous organelles termed Piccolo-Bassoon transport vesicles (PTVs) that are transported along axons to sites of nascent synaptic contacts. At the presynaptic active zone, regulates the spatial organization of synaptic vesicle cluster, the protein complexes that execute membrane fusion and compensatory endocytosis. Also functions in processes other than assembly such as the regulation of specific presynaptic protein ubiquitination by interacting with SIAH1 or the regulation of presynaptic autophagy by associating with ATG5. Also mediates synapse to nucleus communication leading to reconfiguration of gene expression by associating with the transcriptional corepressor CTBP1 and by subsequently reducing the size of its pool available for nuclear import. Inhibits the activity of the proportion of DAO enzyme that localizes to the presynaptic active zone, which may modulate synaptic transmission. In Homo sapiens (Human), this protein is Protein bassoon.